The primary structure comprises 94 residues: MLQSNEYFSGKVKSIGFTSSSTGRASVGVMAEGEYTFGTAEPEEMTVVSGALKVLLPGTVEWKVYTAGEVFNVPGHSEFHLQVAEPTSYLCRYL.

Belongs to the nucleoside phosphorylase PpnP family.

It catalyses the reaction a purine D-ribonucleoside + phosphate = a purine nucleobase + alpha-D-ribose 1-phosphate. It carries out the reaction adenosine + phosphate = alpha-D-ribose 1-phosphate + adenine. The enzyme catalyses cytidine + phosphate = cytosine + alpha-D-ribose 1-phosphate. The catalysed reaction is guanosine + phosphate = alpha-D-ribose 1-phosphate + guanine. It catalyses the reaction inosine + phosphate = alpha-D-ribose 1-phosphate + hypoxanthine. It carries out the reaction thymidine + phosphate = 2-deoxy-alpha-D-ribose 1-phosphate + thymine. The enzyme catalyses uridine + phosphate = alpha-D-ribose 1-phosphate + uracil. The catalysed reaction is xanthosine + phosphate = alpha-D-ribose 1-phosphate + xanthine. Catalyzes the phosphorolysis of diverse nucleosides, yielding D-ribose 1-phosphate and the respective free bases. Can use uridine, adenosine, guanosine, cytidine, thymidine, inosine and xanthosine as substrates. Also catalyzes the reverse reactions. The sequence is that of Pyrimidine/purine nucleoside phosphorylase from Salmonella agona (strain SL483).